Reading from the N-terminus, the 212-residue chain is MSGYSAEQRAAMQCMSLARHGLPHALADCGLPHVHLKIGEGIVTRRALLISTVLGSCVSVTFFSRRLQLAGIFHAMLPVITQSYRPCNEPCRFVDSAIEAVYGNFEKRGLHPEEVEVKLFGGAFSMGLREEHPDRCMIDVGGRNVLTAREVLAAKGLEIRSEQVQGTRGRKLLFNTRTGEVWVKLLNNAANQLARRQEEQARAQSARGCSLD.

Belongs to the CheD family.

The catalysed reaction is L-glutaminyl-[protein] + H2O = L-glutamyl-[protein] + NH4(+). Its function is as follows. Probably deamidates glutamine residues to glutamate on methyl-accepting chemotaxis receptors (MCPs), playing an important role in chemotaxis. The chain is Probable chemoreceptor glutamine deamidase CheD from Oleidesulfovibrio alaskensis (strain ATCC BAA-1058 / DSM 17464 / G20) (Desulfovibrio alaskensis).